A 239-amino-acid polypeptide reads, in one-letter code: Aspartate/glutamate leucyltransferase (239 aa).

Belongs to the R-transferase family. Bpt subfamily.

It is found in the cytoplasm. The catalysed reaction is N-terminal L-glutamyl-[protein] + L-leucyl-tRNA(Leu) = N-terminal L-leucyl-L-glutamyl-[protein] + tRNA(Leu) + H(+). It catalyses the reaction N-terminal L-aspartyl-[protein] + L-leucyl-tRNA(Leu) = N-terminal L-leucyl-L-aspartyl-[protein] + tRNA(Leu) + H(+). Its function is as follows. Functions in the N-end rule pathway of protein degradation where it conjugates Leu from its aminoacyl-tRNA to the N-termini of proteins containing an N-terminal aspartate or glutamate. The protein is Aspartate/glutamate leucyltransferase of Campylobacter jejuni subsp. jejuni serotype O:6 (strain 81116 / NCTC 11828).